The primary structure comprises 1244 residues: Superkiller complex protein 2 (1244 aa).

The tract at residues leucine 218–valine 249 is disordered. Residues serine 242 and serine 253 each carry the phosphoserine modification. The Helicase ATP-binding domain maps to isoleucine 316 to isoleucine 472. Residue alanine 329 to threonine 336 coordinates ATP. The DEVH box signature appears at aspartate 420 to histidine 423. In terms of domain architecture, Helicase C-terminal spans glycine 582–leucine 752.

This sequence belongs to the helicase family. SKI2 subfamily. As to quaternary structure, component of the SKI complex which consists of SKIC2, SKIC3 and SKIC8. Interacts with HBS1L isoform 2.

It localises to the nucleus. Its subcellular location is the cytoplasm. It carries out the reaction ATP + H2O = ADP + phosphate + H(+). Functionally, helicase component of the SKI complex, a multiprotein complex that assists the RNA-degrading exosome during the mRNA decay and quality-control pathways. The SKI complex catalyzes mRNA extraction from 80S ribosomal complexes in the 3'-5' direction and channels mRNA to the cytosolic exosome for degradation. SKI-mediated extraction of mRNA from stalled ribosomes allow binding of the Pelota-HBS1L complex and subsequent ribosome disassembly by ABCE1 for ribosome recycling. In the nucleus, the SKI complex associates with transcriptionally active genes in a manner dependent on PAF1 complex (PAF1C). The protein is Superkiller complex protein 2 of Mus musculus (Mouse).